A 313-amino-acid polypeptide reads, in one-letter code: Protein OPG185 (313 aa).

Residues 1 to 16 (MTRLSILLLLISLVYS) form the signal peptide. The Virion surface portion of the chain corresponds to 17-277 (TPYPQTQISK…GKYSTKDYVK (261 aa)). Positions 18–121 (PYPQTQISKK…TTNDTDKVDY (104 aa)) constitute an Ig-like V-type domain. Cysteines 36 and 105 form a disulfide. N-linked (GlcNAc...) asparagine; by host glycosylation is found at N71, N114, N163, N182, and N262. A helical transmembrane segment spans residues 278–301 (VFGIAALIILSAVAIFCITYYICN). Residues 302 to 313 (KRSRKYKTENKV) lie on the Intravirion side of the membrane.

It belongs to the orthopoxvirus OPG185 family. In terms of assembly, heterodimerizes with OPG040. The heterodimer OPG185-OPG040 interacts with components of the entry fusion complex OPG143 and OPG094. Heterodimer with C3/VPC protein; disulfide-linked. In terms of processing, glycosylated; contains phosphate and sulfate-substituted glycans. O-glycosylation is required for hemagglutination and hemadsorption activities of infected cell membranes.

The protein resides in the virion membrane. It is found in the host membrane. Its function is as follows. Prevents cell to cell fusion by interacting with and directing the viral OPG040 protein on the host plasma membrane. The OPG185-OPG040 complex associates with components of the entry fusion complex (EFC) presumably to avoid superinfection and syncytium formation. Via its interaction with C3/VCP protein, protects the infected cell and probably also the extracellular enveloped virus from complement attack. This Homo sapiens (Human) protein is Protein OPG185 (OPG185).